Consider the following 734-residue polypeptide: Photosystem I P700 chlorophyll a apoprotein A2 (734 aa).

8 helical membrane passes run Ile46–Ala69, Leu135–Gln158, Leu175–Ile199, Ile273–Tyr291, Ile330–Tyr353, Ala369–Ile395, Ala417–His439, and Phe517–Val535. The [4Fe-4S] cluster site is built by Cys559 and Cys568. The next 2 membrane-spanning stretches (helical) occupy residues Ala575–Trp596 and Leu643–Ile665. 3 residues coordinate chlorophyll a: His654, Met662, and Tyr670. Trp671 is a binding site for phylloquinone. Residues Leu707–Ala727 form a helical membrane-spanning segment.

This sequence belongs to the PsaA/PsaB family. As to quaternary structure, the PsaA/B heterodimer binds the P700 chlorophyll special pair and subsequent electron acceptors. PSI consists of a core antenna complex that captures photons, and an electron transfer chain that converts photonic excitation into a charge separation. The eukaryotic PSI reaction center is composed of at least 11 subunits. P700 is a chlorophyll a/chlorophyll a' dimer, A0 is one or more chlorophyll a, A1 is one or both phylloquinones and FX is a shared 4Fe-4S iron-sulfur center. is required as a cofactor.

The protein localises to the plastid. Its subcellular location is the chloroplast thylakoid membrane. The catalysed reaction is reduced [plastocyanin] + hnu + oxidized [2Fe-2S]-[ferredoxin] = oxidized [plastocyanin] + reduced [2Fe-2S]-[ferredoxin]. PsaA and PsaB bind P700, the primary electron donor of photosystem I (PSI), as well as the electron acceptors A0, A1 and FX. PSI is a plastocyanin-ferredoxin oxidoreductase, converting photonic excitation into a charge separation, which transfers an electron from the donor P700 chlorophyll pair to the spectroscopically characterized acceptors A0, A1, FX, FA and FB in turn. Oxidized P700 is reduced on the lumenal side of the thylakoid membrane by plastocyanin. The chain is Photosystem I P700 chlorophyll a apoprotein A2 from Vitis vinifera (Grape).